The following is a 631-amino-acid chain: Phosphomethylpyrimidine synthase (631 aa).

Residues Asn-239, Met-268, Tyr-297, His-333, 353 to 355 (SRG), 394 to 397 (DGLR), and Glu-433 each bind substrate. Residue His-437 coordinates Zn(2+). Residue Tyr-460 coordinates substrate. His-501 contributes to the Zn(2+) binding site. The [4Fe-4S] cluster site is built by Cys-581, Cys-584, and Cys-589.

Belongs to the ThiC family. As to quaternary structure, homodimer. [4Fe-4S] cluster serves as cofactor.

It carries out the reaction 5-amino-1-(5-phospho-beta-D-ribosyl)imidazole + S-adenosyl-L-methionine = 4-amino-2-methyl-5-(phosphooxymethyl)pyrimidine + CO + 5'-deoxyadenosine + formate + L-methionine + 3 H(+). It participates in cofactor biosynthesis; thiamine diphosphate biosynthesis. Catalyzes the synthesis of the hydroxymethylpyrimidine phosphate (HMP-P) moiety of thiamine from aminoimidazole ribotide (AIR) in a radical S-adenosyl-L-methionine (SAM)-dependent reaction. This Ralstonia nicotianae (strain ATCC BAA-1114 / GMI1000) (Ralstonia solanacearum) protein is Phosphomethylpyrimidine synthase.